The sequence spans 96 residues: Large ribosomal subunit protein uL23 (96 aa).

It belongs to the universal ribosomal protein uL23 family. As to quaternary structure, part of the 50S ribosomal subunit. Contacts protein L29, and trigger factor when it is bound to the ribosome.

In terms of biological role, one of the early assembly proteins it binds 23S rRNA. One of the proteins that surrounds the polypeptide exit tunnel on the outside of the ribosome. Forms the main docking site for trigger factor binding to the ribosome. The chain is Large ribosomal subunit protein uL23 from Syntrophus aciditrophicus (strain SB).